The sequence spans 219 residues: Lipid A acyltransferase PagP (219 aa).

The first 28 residues, 1 to 28 (MRLILISHSRLFALSALFLIPTFDSLSA), serve as a signal peptide directing secretion. The segment at 39–63 (IDRTTQSDSTTQRDSKTRRDPAPSF) is disordered. Residues 49–59 (TQRDSKTRRDP) are compositionally biased toward basic and acidic residues. Residues H91, D134, and S135 contribute to the active site.

The protein belongs to the lipid A palmitoyltransferase family. In terms of assembly, homodimer.

The protein resides in the cell outer membrane. It catalyses the reaction a lipid A + a 1,2-diacyl-sn-glycero-3-phosphocholine = a hepta-acyl lipid A + a 2-acyl-sn-glycero-3-phosphocholine. It carries out the reaction a lipid IVA + a 1,2-diacyl-sn-glycero-3-phosphocholine = a lipid IVB + a 2-acyl-sn-glycero-3-phosphocholine. The enzyme catalyses a lipid IIA + a 1,2-diacyl-sn-glycero-3-phosphocholine = a lipid IIB + a 2-acyl-sn-glycero-3-phosphocholine. Transfers a fatty acid residue from the sn-1 position of a phospholipid to the N-linked hydroxyfatty acid chain on the proximal unit of lipid A or its precursors. The protein is Lipid A acyltransferase PagP of Dickeya zeae (strain Ech586) (Dickeya dadantii (strain Ech586)).